The primary structure comprises 365 residues: UDP-N-acetylglucosamine--N-acetylmuramyl-(pentapeptide) pyrophosphoryl-undecaprenol N-acetylglucosamine transferase (365 aa).

UDP-N-acetyl-alpha-D-glucosamine-binding positions include 19-21, asparagine 131, arginine 170, serine 201, isoleucine 255, 274-279, and glutamine 300; these read TGG and ALTVTE.

This sequence belongs to the glycosyltransferase 28 family. MurG subfamily.

It is found in the cell inner membrane. It catalyses the reaction di-trans,octa-cis-undecaprenyl diphospho-N-acetyl-alpha-D-muramoyl-L-alanyl-D-glutamyl-meso-2,6-diaminopimeloyl-D-alanyl-D-alanine + UDP-N-acetyl-alpha-D-glucosamine = di-trans,octa-cis-undecaprenyl diphospho-[N-acetyl-alpha-D-glucosaminyl-(1-&gt;4)]-N-acetyl-alpha-D-muramoyl-L-alanyl-D-glutamyl-meso-2,6-diaminopimeloyl-D-alanyl-D-alanine + UDP + H(+). Its pathway is cell wall biogenesis; peptidoglycan biosynthesis. In terms of biological role, cell wall formation. Catalyzes the transfer of a GlcNAc subunit on undecaprenyl-pyrophosphoryl-MurNAc-pentapeptide (lipid intermediate I) to form undecaprenyl-pyrophosphoryl-MurNAc-(pentapeptide)GlcNAc (lipid intermediate II). The sequence is that of UDP-N-acetylglucosamine--N-acetylmuramyl-(pentapeptide) pyrophosphoryl-undecaprenol N-acetylglucosamine transferase from Acinetobacter baumannii (strain ATCC 17978 / DSM 105126 / CIP 53.77 / LMG 1025 / NCDC KC755 / 5377).